A 579-amino-acid chain; its full sequence is Laccase-4 (579 aa).

Residues 1–28 (MTMAISSALPSPLLLAASLLLLIVQAQG) form the signal peptide. 2 Plastocyanin-like domains span residues 36 to 152 (NVQM…PKLG) and 162 to 316 (KEVP…YENP). N-linked (GlcNAc...) asparagine glycans are attached at residues Asn-41 and Asn-82. Residues His-86 and His-88 each coordinate Cu cation. An N-linked (GlcNAc...) asparagine glycan is attached at Asn-118. Positions 131 and 133 each coordinate Cu cation. Asn-191, Asn-207, Asn-243, Asn-304, Asn-340, Asn-347, Asn-386, Asn-393, Asn-403, Asn-439, Asn-446, and Asn-462 each carry an N-linked (GlcNAc...) asparagine glycan. Residues 429–563 (DFPVAPLSPF…RMAWLVLDGS (135 aa)) enclose the Plastocyanin-like 3 domain. Residues His-480, His-483, His-485, His-542, Cys-543, His-544, and His-548 each contribute to the Cu cation site.

The protein belongs to the multicopper oxidase family. Requires Cu cation as cofactor.

It localises to the secreted. Its subcellular location is the extracellular space. The protein localises to the apoplast. The enzyme catalyses 4 hydroquinone + O2 = 4 benzosemiquinone + 2 H2O. Lignin degradation and detoxification of lignin-derived products. The sequence is that of Laccase-4 (LAC4) from Oryza sativa subsp. japonica (Rice).